The sequence spans 924 residues: Intercellular adhesion molecule 5 (924 aa).

The N-terminal stretch at 1–31 (MPGPSPGLRRALLGLWAALGLGLFGLSAVSQ) is a signal peptide. The Extracellular portion of the chain corresponds to 32–835 (EPFWADLQPR…RITVRVAGPW (804 aa)). 9 Ig-like C2-type domains span residues 48–130 (GGSL…PLPP), 135–235 (GENF…RLAA), 242–329 (GSER…LLTL), 337–402 (GQMV…SAEL), 408–486 (PRLD…VTLT), 491–568 (PALD…VAVT), 573–662 (PRFE…VVSA), 666–739 (PEMD…RTVT), and 746–830 (PVVA…ITVR). Asparagine 54 carries an N-linked (GlcNAc...) (high mannose) asparagine glycan. 2 disulfides stabilise this stretch: cysteine 55–cysteine 99 and cysteine 59–cysteine 103. Asparagine 74 and asparagine 137 each carry an N-linked (GlcNAc...) asparagine glycan. Cysteine 142 and cysteine 198 are joined by a disulfide. Threonine 182 and threonine 184 each carry phosphothreonine. 2 N-linked (GlcNAc...) asparagine glycosylation sites follow: asparagine 195 and asparagine 214. Cysteine 249 and cysteine 302 are disulfide-bonded. N-linked (GlcNAc...) asparagine glycans are attached at residues asparagine 303, asparagine 316, asparagine 371, and asparagine 397. A disulfide bridge connects residues cysteine 344 and cysteine 383. Intrachain disulfides connect cysteine 415–cysteine 470, cysteine 498–cysteine 552, and cysteine 580–cysteine 645. N-linked (GlcNAc...) asparagine glycosylation is found at asparagine 583 and asparagine 646. A disulfide bond links cysteine 673 and cysteine 725. Residues asparagine 764, asparagine 795, and asparagine 796 are each glycosylated (N-linked (GlcNAc...) asparagine). A disulfide bridge links cysteine 769 with cysteine 814. Residues 836–856 (LWVAVGGAAGGAALLAAGAGL) traverse the membrane as a helical segment. The Cytoplasmic portion of the chain corresponds to 857–924 (AFYVQSTACK…EVFAIQLTSA (68 aa)). The span at 891 to 903 (AGGAAGAEGGPEA) shows a compositional bias: gly residues. A disordered region spans residues 891–911 (AGGAAGAEGGPEAAGGAAESP).

The protein belongs to the immunoglobulin superfamily. ICAM family. Glycosylation at Asn-54 is critical for functional folding. Expressed on neurons in the most rostral segment of the mammalian brain, the telencephalon.

It is found in the membrane. In terms of biological role, ICAM proteins are ligands for the leukocyte adhesion protein LFA-1 (integrin alpha-L/beta-2). The protein is Intercellular adhesion molecule 5 (ICAM5) of Homo sapiens (Human).